The following is a 641-amino-acid chain: Epithelial sodium channel subunit beta (641 aa).

Residues 1-50 (MHVKKYLLKCLHRLQKGPGYTYKELLVWYCDNTNTHGPKRIIREGPKKKA) lie on the Cytoplasmic side of the membrane. Residues 51–71 (MWFLITLLFASLVCWQWGVFI) traverse the membrane as a helical segment. The Extracellular portion of the chain corresponds to 72-533 (KTYLSWEVSV…GGQFGFWMGG (462 aa)). 9 disulfides stabilise this stretch: Cys-98–Cys-273, Cys-185–Cys-190, Cys-197–Cys-204, Cys-250–Cys-257, Cys-362–Cys-449, Cys-387–Cys-445, Cys-391–Cys-441, Cys-400–Cys-427, and Cys-402–Cys-416. Residue Asn-141 is glycosylated (N-linked (GlcNAc...) asparagine). Residues Asn-261 and Asn-379 are each glycosylated (N-linked (GlcNAc...) asparagine). Residues 534–554 (SVLCLIEFAEIIIDFVWITII) traverse the membrane as a helical segment. The Cytoplasmic portion of the chain corresponds to 555 to 641 (KLVALAKGLR…VESDSEGDAV (87 aa)). Positions 596–641 (GHRSPDAEAYPDEQALPIPGTPPPNYDSLRLQPLDVVESDSEGDAV) are disordered. A PY motif; recruits WW domain-containing proteins and is thereby required for ubiquitination and inhibition of the channel by NEDD4 and NEDD4L motif is present at residues 617-621 (PPPNY). Over residues 632–641 (VESDSEGDAV) the composition is skewed to acidic residues. Ser-634 and Ser-636 each carry phosphoserine.

This sequence belongs to the amiloride-sensitive sodium channel (TC 1.A.6) family. SCNN1B subfamily. As to quaternary structure, component of the heterotrimeric epithelial sodium channel (ENaC) composed of an alpha/SCNN1A, a beta/SCNN1B and a gamma/SCNN1G subunit. Interacts with WWP1 (via WW domains). Interacts with WWP2 (via WW domains); inhibits the channel. Interacts with the full-length immature form of PCSK9 (pro-PCSK9). Interacts (N-glycosylated) with BPIFA1; the interaction is direct and inhibits the proteolytic processing of SCNN1A and SCNN1G and the activation of ENaC. In terms of processing, ubiquitinated. Can be ubiquitinated at multiple sites and undergo monoubiquitination and polyubiquitination. Ubiquitination by NEDD4 or NEDD4L inhibits the ENaC channel through endocytosis, intracellular retention and degradation of its individual subunits. However, some studies could not confirm the ubiquitination of this subunit of the ENaC. Phosphorylated on serine and threonine residues. Aldosterone and insulin increase the basal level of phosphorylation. Post-translationally, N-glycosylated. N-glycosylation is required for interaction with BPIFA1.

It is found in the apical cell membrane. Its subcellular location is the cytoplasmic vesicle membrane. It carries out the reaction Na(+)(in) = Na(+)(out). Its activity is regulated as follows. Originally identified and characterized by its inhibition by the diuretic drug amiloride. This is one of the three pore-forming subunits of the heterotrimeric epithelial sodium channel (ENaC), a critical regulator of sodium balance and fluid homeostasis. ENaC operates in epithelial tissues, where it mediates the electrodiffusion of sodium ions from extracellular fluid through the apical membrane of cells, with water following osmotically. It plays a key role in maintaining sodium homeostasis through electrogenic sodium reabsorption in the kidneys. Additionally, ENaC is essential for airway surface liquid homeostasis, which is crucial for proper mucus clearance. The sequence is that of Epithelial sodium channel subunit beta from Oryctolagus cuniculus (Rabbit).